Consider the following 287-residue polypeptide: Stomatin-like protein 3 (287 aa).

The residue at position 3 (S3) is a Phosphoserine. Residues 25-45 form a helical; Signal-anchor for type III membrane protein membrane-spanning segment; sequence WILFFLSFLLMLVTFPISVWM. At 46-287 the chain is on the cytoplasmic side; it reads CLKIIKEYER…GNNKKVTAKA (242 aa). S237 is subject to Phosphoserine.

Belongs to the band 7/mec-2 family. As to quaternary structure, homodimer. Interacts with PIEZO1 and PIEZO2. As to expression, expressed by all dorsal root ganglion neurons and is selectively expressed in neuronal tissues. Detected in olfactory epithelium.

It localises to the cell membrane. Its function is as follows. Required for the function of many mechanoreceptors. Modulate mechanotransduction channels and acid-sensing ion channels (ASIC) proteins. Potentiates PIEZO1 and PIEZO2 function by increasing their sensitivity to mechanical stimulations. This is Stomatin-like protein 3 (Stoml3) from Mus musculus (Mouse).